Consider the following 312-residue polypeptide: Olfactory receptor 13J1 (312 aa).

Residues 1–25 (MEPLNRTEVSEFFLKGFSGYPALEH) are Extracellular-facing. N5 carries an N-linked (GlcNAc...) asparagine glycan. A helical membrane pass occupies residues 26–46 (LLFPLCSAMYLVTLLGNTAIM). Residues 47–54 (AVSVLDIH) are Cytoplasmic-facing. A helical transmembrane segment spans residues 55–75 (LHTPVYFFLGNLSTLDICYTP). The Extracellular portion of the chain corresponds to 76–99 (TFVPLMLVHLLSSRKTISFAVCAI). C97 and C189 are joined by a disulfide. A helical membrane pass occupies residues 100–120 (QMCLSLSTGSTECLLLAITAY). Residues 121 to 139 (DRYLAICQPLRYHVLMSHR) lie on the Cytoplasmic side of the membrane. Residues 140-160 (LCVLLMGAAWVLCLLKSVTEM) form a helical membrane-spanning segment. Over 161 to 197 (VISMRLPFCGHHVVSHFTCKILAVLKLACGNTSVSED) the chain is Extracellular. N191 carries an N-linked (GlcNAc...) asparagine glycan. Residues 198–217 (FLLAGSILLLPVPLAFICLS) traverse the membrane as a helical segment. At 218–237 (YLLILATILRVPSAARCCKA) the chain is on the cytoplasmic side. The chain crosses the membrane as a helical span at residues 238-258 (FSTCLAHLAVVLLFYGTIIFM). At 259–271 (YLKPKSKEAHISD) the chain is on the extracellular side. The helical transmembrane segment at 272–292 (EVFTVLYAMVTTMLNPTIYSL) threads the bilayer. Residues 293 to 312 (RNKEVKEAARKVWGRSRASR) lie on the Cytoplasmic side of the membrane.

Belongs to the G-protein coupled receptor 1 family.

Its subcellular location is the cell membrane. Odorant receptor. This is Olfactory receptor 13J1 (OR13J1) from Homo sapiens (Human).